A 375-amino-acid chain; its full sequence is D-alanine--D-alanine ligase (375 aa).

One can recognise an ATP-grasp domain in the interval Lys145 to Glu348. Ile175–Glu230 lines the ATP pocket. The Mg(2+) site is built by Asp302, Glu315, and Asn317.

Belongs to the D-alanine--D-alanine ligase family. Mg(2+) serves as cofactor. Mn(2+) is required as a cofactor.

The protein localises to the cytoplasm. The catalysed reaction is 2 D-alanine + ATP = D-alanyl-D-alanine + ADP + phosphate + H(+). The protein operates within cell wall biogenesis; peptidoglycan biosynthesis. Its function is as follows. Cell wall formation. The protein is D-alanine--D-alanine ligase of Baumannia cicadellinicola subsp. Homalodisca coagulata.